The following is a 106-amino-acid chain: Flagellar transcriptional regulator FlhD (106 aa).

The protein belongs to the FlhD family. In terms of assembly, homodimer; disulfide-linked. Forms a heterohexamer composed of two FlhC and four FlhD subunits. Each FlhC binds a FlhD dimer, forming a heterotrimer, and a hexamer assembles by dimerization of two heterotrimers.

The protein localises to the cytoplasm. Its function is as follows. Functions in complex with FlhC as a master transcriptional regulator that regulates transcription of several flagellar and non-flagellar operons by binding to their promoter region. Activates expression of class 2 flagellar genes, including fliA, which is a flagellum-specific sigma factor that turns on the class 3 genes. Also regulates genes whose products function in a variety of physiological pathways. This is Flagellar transcriptional regulator FlhD from Burkholderia pseudomallei (strain 1710b).